A 640-amino-acid chain; its full sequence is Threonine--tRNA ligase (640 aa).

The 59-residue stretch at 1–59 folds into the TGS domain; that stretch reads MKIKVKLPDGKEKEYDRGITPAEIAKELGVKKAIGAVVNGELWDLKRPIENDCELRLVT. Residues 240 to 531 are catalytic; the sequence is DHRKLGPHLE…LIEHFAGAFP (292 aa). Positions 332, 383, and 508 each coordinate Zn(2+).

The protein belongs to the class-II aminoacyl-tRNA synthetase family. As to quaternary structure, homodimer. It depends on Zn(2+) as a cofactor.

It is found in the cytoplasm. The catalysed reaction is tRNA(Thr) + L-threonine + ATP = L-threonyl-tRNA(Thr) + AMP + diphosphate + H(+). In terms of biological role, catalyzes the attachment of threonine to tRNA(Thr) in a two-step reaction: L-threonine is first activated by ATP to form Thr-AMP and then transferred to the acceptor end of tRNA(Thr). Also edits incorrectly charged L-seryl-tRNA(Thr). The polypeptide is Threonine--tRNA ligase (Thermotoga sp. (strain RQ2)).